A 252-amino-acid polypeptide reads, in one-letter code: Trans-aconitate 2-methyltransferase (252 aa).

The protein belongs to the methyltransferase superfamily. Tam family.

The protein localises to the cytoplasm. It catalyses the reaction trans-aconitate + S-adenosyl-L-methionine = (E)-3-(methoxycarbonyl)pent-2-enedioate + S-adenosyl-L-homocysteine. Catalyzes the S-adenosylmethionine monomethyl esterification of trans-aconitate. The chain is Trans-aconitate 2-methyltransferase from Escherichia coli (strain ATCC 8739 / DSM 1576 / NBRC 3972 / NCIMB 8545 / WDCM 00012 / Crooks).